The following is a 353-amino-acid chain: Protein RecA (353 aa).

67–74 contacts ATP; it reads GPESSGKT.

This sequence belongs to the RecA family.

The protein localises to the cytoplasm. Can catalyze the hydrolysis of ATP in the presence of single-stranded DNA, the ATP-dependent uptake of single-stranded DNA by duplex DNA, and the ATP-dependent hybridization of homologous single-stranded DNAs. It interacts with LexA causing its activation and leading to its autocatalytic cleavage. This Shewanella sediminis (strain HAW-EB3) protein is Protein RecA.